We begin with the raw amino-acid sequence, 223 residues long: 2-C-methyl-D-erythritol 4-phosphate cytidylyltransferase (223 aa).

The protein belongs to the IspD/TarI cytidylyltransferase family. IspD subfamily.

The catalysed reaction is 2-C-methyl-D-erythritol 4-phosphate + CTP + H(+) = 4-CDP-2-C-methyl-D-erythritol + diphosphate. It participates in isoprenoid biosynthesis; isopentenyl diphosphate biosynthesis via DXP pathway; isopentenyl diphosphate from 1-deoxy-D-xylulose 5-phosphate: step 2/6. Its function is as follows. Catalyzes the formation of 4-diphosphocytidyl-2-C-methyl-D-erythritol from CTP and 2-C-methyl-D-erythritol 4-phosphate (MEP). The sequence is that of 2-C-methyl-D-erythritol 4-phosphate cytidylyltransferase from Prochlorococcus marinus subsp. pastoris (strain CCMP1986 / NIES-2087 / MED4).